The following is a 308-amino-acid chain: ADP-L-glycero-D-manno-heptose-6-epimerase (308 aa).

NADP(+) is bound by residues 10–11, 31–32, lysine 38, lysine 53, 75–79, and asparagine 92; these read MI, DN, and EGACS. Catalysis depends on tyrosine 139, which acts as the Proton acceptor. An NADP(+)-binding site is contributed by lysine 143. Residue asparagine 168 participates in substrate binding. Residues valine 169 and lysine 177 each coordinate NADP(+). Lysine 177 acts as the Proton acceptor in catalysis. Substrate is bound by residues serine 179, histidine 186, 200 to 203, arginine 208, and tyrosine 271; that span reads FAGS.

Belongs to the NAD(P)-dependent epimerase/dehydratase family. HldD subfamily. In terms of assembly, homopentamer. NADP(+) serves as cofactor.

It carries out the reaction ADP-D-glycero-beta-D-manno-heptose = ADP-L-glycero-beta-D-manno-heptose. It functions in the pathway nucleotide-sugar biosynthesis; ADP-L-glycero-beta-D-manno-heptose biosynthesis; ADP-L-glycero-beta-D-manno-heptose from D-glycero-beta-D-manno-heptose 7-phosphate: step 4/4. Its function is as follows. Catalyzes the interconversion between ADP-D-glycero-beta-D-manno-heptose and ADP-L-glycero-beta-D-manno-heptose via an epimerization at carbon 6 of the heptose. The protein is ADP-L-glycero-D-manno-heptose-6-epimerase of Mannheimia succiniciproducens (strain KCTC 0769BP / MBEL55E).